The following is a 444-amino-acid chain: ATP-dependent protease ATPase subunit HslU (444 aa).

ATP-binding positions include I18 and 60–65 (GVGKTE). Positions 143–163 (WGEVESHDSHSSTRQAFRKKL) are disordered. ATP-binding residues include D257, E322, and R394.

It belongs to the ClpX chaperone family. HslU subfamily. A double ring-shaped homohexamer of HslV is capped on each side by a ring-shaped HslU homohexamer. The assembly of the HslU/HslV complex is dependent on binding of ATP.

It is found in the cytoplasm. ATPase subunit of a proteasome-like degradation complex; this subunit has chaperone activity. The binding of ATP and its subsequent hydrolysis by HslU are essential for unfolding of protein substrates subsequently hydrolyzed by HslV. HslU recognizes the N-terminal part of its protein substrates and unfolds these before they are guided to HslV for hydrolysis. This is ATP-dependent protease ATPase subunit HslU from Haemophilus influenzae (strain PittEE).